Here is a 350-residue protein sequence, read N- to C-terminus: [LysW]-L-2-aminoadipate/[LysW]-L-glutamate phosphate reductase (350 aa).

NADP(+) is bound at residue 10 to 13 (SGYT). Cysteine 150 is an active-site residue. Residue asparagine 317 coordinates NADP(+).

Belongs to the NAGSA dehydrogenase family. Type 1 subfamily. LysY sub-subfamily.

The protein resides in the cytoplasm. It carries out the reaction [amino-group carrier protein]-C-terminal-N-(1-carboxy-5-oxopentan-1-yl)-L-glutamine + phosphate + NADP(+) = [amino-group carrier protein]-C-terminal-N-(1-carboxy-5-phosphooxy-5-oxopentan-1-yl)-L-glutamine + NADPH + H(+). The enzyme catalyses [amino-group carrier protein]-C-terminal-gamma-(L-glutamyl-5-semialdehyde)-L-glutamate + phosphate + NADP(+) = [amino-group carrier protein]-C-terminal-gamma-(5-phospho-L-glutamyl)-L-glutamate + NADPH + H(+). Its pathway is amino-acid biosynthesis; L-lysine biosynthesis via AAA pathway; L-lysine from L-alpha-aminoadipate (Thermus route): step 3/5. The protein operates within amino-acid biosynthesis; L-arginine biosynthesis. Functionally, involved in both the arginine and lysine biosynthetic pathways. In Sulfolobus acidocaldarius (strain ATCC 33909 / DSM 639 / JCM 8929 / NBRC 15157 / NCIMB 11770), this protein is [LysW]-L-2-aminoadipate/[LysW]-L-glutamate phosphate reductase.